Here is a 1705-residue protein sequence, read N- to C-terminus: Intersectin-1 (1705 aa).

2 consecutive EH domains span residues 21-109 (ERAK…PVAM) and 220-309 (SRLK…SFRR). 2 EF-hand domains span residues 53 to 88 (LPQP…IKLK) and 253 to 288 (LPQS…IDVA). 10 residues coordinate Ca(2+): Asp66, Asn68, Asp70, Arg72, Glu77, Asp266, Asp268, Asp270, Lys272, and Glu277. 3 disordered regions span residues 322–355 (VSVD…KREN), 386–433 (RAEQ…ERRE), and 668–708 (RYKF…PPEP). The segment at 325–697 (DQRLPEEPEE…VEKKPEIQEK (373 aa)) is KLERQ. Positions 339–355 (NADKKLPVTFEDKKREN) are enriched in basic and acidic residues. Residues 350-687 (DKKRENFERG…KREESIQKCE (338 aa)) are a coiled coil. A compositionally biased stretch (basic and acidic residues) spans 668–699 (RYKFQDEEKEKREESIQKCEVEKKPEIQEKPN). An SH3 1 domain is found at 732 to 793 (VKVVYYRALY…PANYAERMPE (62 aa)). Residues 823-833 (AFTNTSTNSNN) show a composition bias toward low complexity. Residues 823-851 (AFTNTSTNSNNWADFSSTWPTNNTDKVES) form a disordered region. Polar residues predominate over residues 834 to 846 (WADFSSTWPTNNT). The SH3 2 domain maps to 897–955 (VEGLQAQALYPWRAKKDNHLNFNKNDVITVLEQQDMWWFGEVQGQKGWFPKSYVKLISG). The interval 959–978 (KSTSIDSTSSESPASLKRVS) is disordered. Low complexity predominate over residues 960–973 (STSIDSTSSESPAS). SH3 domains are found at residues 986–1044 (IQGE…PKDS), 1058–1122 (KKPE…LLSP), and 1139–1198 (PPTC…LTTD). A Bipartite nuclear localization signal; in isoform 2 motif is present at residues 1088–1111 (RKKNPGGWWEGELQARGKKRQIGW). Residues 1221 to 1407 (KRQGYIHELI…EELCSQVNEG (187 aa)) enclose the DH domain. One can recognise a PH domain in the interval 1446–1555 (KFLHSGKLYK…WVQKIKAASE (110 aa)). Residues 1563 to 1679 (KKREKAYLVR…KKDQGSKGPV (117 aa)) form the C2 domain. Positions 1651, 1654, and 1657 each coordinate Ca(2+).

Binds epn1 and epn2. The cofactor is Ca(2+).

It is found in the endomembrane system. Its subcellular location is the synapse. The protein localises to the synaptosome. It localises to the cell projection. The protein resides in the lamellipodium. It is found in the cell membrane. Its subcellular location is the membrane. The protein localises to the clathrin-coated pit. It localises to the recycling endosome. The protein resides in the cytoplasm. It is found in the nucleus envelope. Its function is as follows. Adapter protein that provides a link between the endocytic membrane traffic and the actin assembly machinery. Acts as a guanine nucleotide exchange factor (GEF) for cdc42, and thereby stimulates actin nucleation mediated by wasl and the arp2/3 complex. Involved in endocytosis of activated egfr, and probably also other growth factor receptors. This chain is Intersectin-1 (itsn1), found in Xenopus laevis (African clawed frog).